Here is a 505-residue protein sequence, read N- to C-terminus: ATP synthase subunit alpha (505 aa).

171–178 lines the ATP pocket; that stretch reads GDRQTGKT.

The protein belongs to the ATPase alpha/beta chains family. In terms of assembly, F-type ATPases have 2 components, CF(1) - the catalytic core - and CF(0) - the membrane proton channel. CF(1) has five subunits: alpha(3), beta(3), gamma(1), delta(1), epsilon(1). CF(0) has three main subunits: a(1), b(2) and c(9-12). The alpha and beta chains form an alternating ring which encloses part of the gamma chain. CF(1) is attached to CF(0) by a central stalk formed by the gamma and epsilon chains, while a peripheral stalk is formed by the delta and b chains.

It is found in the cell inner membrane. The enzyme catalyses ATP + H2O + 4 H(+)(in) = ADP + phosphate + 5 H(+)(out). Functionally, produces ATP from ADP in the presence of a proton gradient across the membrane. The alpha chain is a regulatory subunit. This Campylobacter concisus (strain 13826) protein is ATP synthase subunit alpha.